The chain runs to 206 residues: Small ribosomal subunit protein uS4 (206 aa).

One can recognise an S4 RNA-binding domain in the interval 96 to 158 (SRLDNVVYRM…AKKQSRIKAA (63 aa)).

The protein belongs to the universal ribosomal protein uS4 family. Part of the 30S ribosomal subunit. Contacts protein S5. The interaction surface between S4 and S5 is involved in control of translational fidelity.

In terms of biological role, one of the primary rRNA binding proteins, it binds directly to 16S rRNA where it nucleates assembly of the body of the 30S subunit. With S5 and S12 plays an important role in translational accuracy. This is Small ribosomal subunit protein uS4 from Wigglesworthia glossinidia brevipalpis.